The following is a 441-amino-acid chain: Amino-acid acetyltransferase (441 aa).

The region spanning 295–434 (EQIRRANIND…QALYNYQRRS (140 aa)) is the N-acetyltransferase domain.

The protein belongs to the acetyltransferase family. ArgA subfamily. Homohexamer.

Its subcellular location is the cytoplasm. It carries out the reaction L-glutamate + acetyl-CoA = N-acetyl-L-glutamate + CoA + H(+). It participates in amino-acid biosynthesis; L-arginine biosynthesis; N(2)-acetyl-L-ornithine from L-glutamate: step 1/4. This chain is Amino-acid acetyltransferase, found in Edwardsiella ictaluri (strain 93-146).